We begin with the raw amino-acid sequence, 150 residues long: UPF0178 protein Reut_B5138 (150 aa).

The protein belongs to the UPF0178 family.

The sequence is that of UPF0178 protein Reut_B5138 from Cupriavidus pinatubonensis (strain JMP 134 / LMG 1197) (Cupriavidus necator (strain JMP 134)).